An 861-amino-acid polypeptide reads, in one-letter code: ToMV resistance protein Tm-2(2) (861 aa).

Residues 63–83 adopt a coiled-coil conformation; the sequence is VKNLLKDIQELAGDVEDLLDD. Positions 162–388 constitute an NB-ARC domain; the sequence is DDFNMLQAKL…LESMGHKVQD (227 aa). 185–192 is an ATP binding site; it reads GMPGLGKT. LRR repeat units lie at residues 225–248, 305–327, 388–411, 449–472, 510–536, 585–608, 609–631, 652–680, 689–710, 712–735, 736–758, 784–810, and 811–835; these read LDIA…NLRS, LHAL…IFNF, DGCA…CFLY, LAED…TYNG, VARL…KLEK, MTCL…IVKL, TRLE…VWES, ISSF…FFEP, LRKL…IFSP, LKAL…LSSY, PHIA…SFPP, LRKL…GYSF, and PQLE…DVSM.

This sequence belongs to the disease resistance NB-LRR family. As to quaternary structure, (Microbial infection) Interacts with tobamoviruses mouvement protein (e.g. tobacco mosaic virus (TMV) MP, AC P03583) at the plasma membrane; this interaction triggers defense responses leading to programmed cell death. In terms of assembly, binds to HSP90 proteins (e.g. HSP90-1 and Nicotiana benthamiana HSP90-1); this interaction seems required for defense responses toward tobamoviruses.

The protein resides in the cell membrane. Functionally, inhibitor of viral mouvements which confers resistance to some tobamoviruses including tomato mosaic virus (ToMV) (e.g. strains L, B7 and ToMV1-2) and tobacco mosaic virus (TMV), but not to resistance-breaking isolates (e.g. LIIA and ToMV2(2)) ToMV and tomato brown rugose fruit virus (ToBRFV). Elicits a hypersensitive reaction in response to avirulent (Avr) movement proteins from resistance inducing tobamoviruses (e.g. ToMV and TMV) strains, thus leading to programmed cell death; this local extreme resistance requires rbcS. This is ToMV resistance protein Tm-2(2) from Solanum lycopersicum (Tomato).